The primary structure comprises 308 residues: 4-diphosphocytidyl-2-C-methyl-D-erythritol kinase (308 aa).

Residue lysine 24 is part of the active site. Residue 118-128 (PVGAGMAGGSA) participates in ATP binding. Aspartate 160 is a catalytic residue.

The protein belongs to the GHMP kinase family. IspE subfamily.

It catalyses the reaction 4-CDP-2-C-methyl-D-erythritol + ATP = 4-CDP-2-C-methyl-D-erythritol 2-phosphate + ADP + H(+). The protein operates within isoprenoid biosynthesis; isopentenyl diphosphate biosynthesis via DXP pathway; isopentenyl diphosphate from 1-deoxy-D-xylulose 5-phosphate: step 3/6. Its function is as follows. Catalyzes the phosphorylation of the position 2 hydroxy group of 4-diphosphocytidyl-2C-methyl-D-erythritol. The polypeptide is 4-diphosphocytidyl-2-C-methyl-D-erythritol kinase (Bifidobacterium adolescentis (strain ATCC 15703 / DSM 20083 / NCTC 11814 / E194a)).